Consider the following 277-residue polypeptide: Probable cytochrome c oxidase subunit 3 (277 aa).

6 consecutive transmembrane segments (helical) span residues 20-40, 45-65, 88-108, 173-193, 211-231, and 255-275; these read PWPI…VSFM, FNHY…YSWW, IGMA…FASF, CVTA…MQAY, FYLA…FLIV, and AWYW…VYIF.

The protein belongs to the cytochrome c oxidase subunit 3 family.

It localises to the cell membrane. It catalyses the reaction 4 Fe(II)-[cytochrome c] + O2 + 8 H(+)(in) = 4 Fe(III)-[cytochrome c] + 2 H2O + 4 H(+)(out). This chain is Probable cytochrome c oxidase subunit 3 (ctaE), found in Rickettsia bellii (strain RML369-C).